A 144-amino-acid polypeptide reads, in one-letter code: Signal recognition particle 19 kDa protein (144 aa).

Residues 117–144 form a disordered region; the sequence is TRTQKTGGGDQSLQQGEGSKKGKGKKKK.

Belongs to the SRP19 family. In terms of assembly, component of a signal recognition particle complex that consists of a 7SL RNA molecule of 300 nucleotides and six protein subunits: SRP72, SRP68, SRP54, SRP19, SRP14 and SRP9. Interacts with IPO5, IPO7, IPO8, KPNB1 and TNPO1. Interactions with IPO8 and TNPO1 may be involved in SRP19 import into the nucleus.

The protein resides in the cytoplasm. It localises to the nucleus. Its subcellular location is the nucleolus. It is found in the nucleoplasm. Component of the signal recognition particle (SRP) complex, a ribonucleoprotein complex that mediates the cotranslational targeting of secretory and membrane proteins to the endoplasmic reticulum (ER). Binds directly to 7SL RNA. Mediates binding of SRP54 to the SRP complex. The protein is Signal recognition particle 19 kDa protein of Canis lupus familiaris (Dog).